Reading from the N-terminus, the 142-residue chain is Lysozyme X (142 aa).

The signal sequence occupies residues 1-19; it reads MRALLGICVLALVTPAVLG. One can recognise a C-type lysozyme domain in the interval 20 to 142; sequence RTMDRCSLAR…YLPPIDDCFV (123 aa). Cystine bridges form between C25–C140, C46–C130, C81–C97, and C93–C111. Active-site residues include E51 and D69.

This sequence belongs to the glycosyl hydrolase 22 family. Found in the midgut.

It catalyses the reaction Hydrolysis of (1-&gt;4)-beta-linkages between N-acetylmuramic acid and N-acetyl-D-glucosamine residues in a peptidoglycan and between N-acetyl-D-glucosamine residues in chitodextrins.. In terms of biological role, unlikely to play an active role in the humoral immune defense. May have a function in the digestion of bacteria in the food. May be involved in the clearance of bacteria from the larval gut before metamorphosis. In Drosophila melanogaster (Fruit fly), this protein is Lysozyme X (LysX).